Consider the following 457-residue polypeptide: Cysteine--tRNA ligase (457 aa).

Cys-30 lines the Zn(2+) pocket. A 'HIGH' region motif is present at residues 32 to 42 (PTVYAPAHIGN). Positions 221, 246, and 250 each coordinate Zn(2+). Positions 278 to 282 (KMSKS) match the 'KMSKS' region motif. Residue Lys-281 coordinates ATP.

The protein belongs to the class-I aminoacyl-tRNA synthetase family. As to quaternary structure, monomer. Zn(2+) serves as cofactor.

Its subcellular location is the cytoplasm. It catalyses the reaction tRNA(Cys) + L-cysteine + ATP = L-cysteinyl-tRNA(Cys) + AMP + diphosphate. The sequence is that of Cysteine--tRNA ligase from Opitutus terrae (strain DSM 11246 / JCM 15787 / PB90-1).